A 327-amino-acid polypeptide reads, in one-letter code: Small ribosomal subunit protein RACK1z (327 aa).

WD repeat units follow at residues A13–K44, G61–D91, G103–N133, G148–N180, G192–D222, E233–D262, and R293–G323.

The protein belongs to the WD repeat G protein beta family. Ribosomal protein RACK1 subfamily. Homodimer and heterodimer with RACK1B or RACK1C. Interacts with NUDT7. Interacts with GB1, MEKK1, MKK4, MKK5, MPK3 and MPK6, but not with GPA1 or MPK4. Interacts with OFUT20. As to expression, widely expressed.

The protein localises to the cytoplasm. The protein resides in the nucleus. In terms of biological role, major component of the RACK1 regulatory proteins that play a role in multiple signal transduction pathways. Involved in multiple hormone responses and developmental processes. MAPK cascade scaffolding protein involved in the protease IV and ArgC signaling pathway but not the flg22 pathway. The protein is Small ribosomal subunit protein RACK1z of Arabidopsis thaliana (Mouse-ear cress).